The chain runs to 104 residues: Thioredoxin (104 aa).

The region spanning 2 to 104 (AIVKATDQSF…ALQELVNKHL (103 aa)) is the Thioredoxin domain. A disulfide bridge links C29 with C32.

Belongs to the thioredoxin family.

Functionally, participates in various redox reactions through the reversible oxidation of its active center dithiol to a disulfide and catalyzes dithiol-disulfide exchange reactions. The protein is Thioredoxin (trxA) of Bacillus subtilis (strain 168).